A 693-amino-acid chain; its full sequence is Methionine--tRNA ligase (693 aa).

The 'HIGH' region signature appears at proline 12–histidine 22. Zn(2+) is bound by residues cysteine 143, cysteine 146, cysteine 156, and cysteine 159. The 'KMSKS' region motif lies at lysine 330–serine 334. ATP is bound at residue lysine 333. The disordered stretch occupies residues alanine 557 to glutamate 576. A tRNA-binding domain is found at aspartate 590 to arginine 693.

It belongs to the class-I aminoacyl-tRNA synthetase family. MetG type 1 subfamily. Homodimer. It depends on Zn(2+) as a cofactor.

The protein resides in the cytoplasm. It catalyses the reaction tRNA(Met) + L-methionine + ATP = L-methionyl-tRNA(Met) + AMP + diphosphate. In terms of biological role, is required not only for elongation of protein synthesis but also for the initiation of all mRNA translation through initiator tRNA(fMet) aminoacylation. The chain is Methionine--tRNA ligase from Stenotrophomonas maltophilia (strain R551-3).